We begin with the raw amino-acid sequence, 371 residues long: Forkhead box protein J1.2 (371 aa).

Disordered stretches follow at residues 45–74 and 80–99; these read ANSR…APRT and VAVP…PVQE. Residues 109–203 constitute a DNA-binding region (fork-head); sequence KPPYSYATLI…VNGVLKRRRM (95 aa). Residues 228-248 are disordered; it reads PSSHHMQHISGGHRQSRRYEK.

This sequence belongs to the FOXJ1 family. In terms of tissue distribution, expressed diffusely through much of gastrula and neurula stage embryos. At stage 23 (late neurula), limited to the otic vesicle. By stage 28 (tailbud), also expressed transiently in the presumptive nephrostomes of the pronephros. At stage 35 (early tadpole), expressed broadly in the head and strongly expressed in the developing gill structures.

Its subcellular location is the nucleus. Functionally, key transcription factor required for motile ciliogenesis. Activates genes essential for motile cilia formation and function. This chain is Forkhead box protein J1.2, found in Xenopus tropicalis (Western clawed frog).